We begin with the raw amino-acid sequence, 447 residues long: Adenylosuccinate synthetase (447 aa).

Residues 35 to 41 (GDEGKGK) and 63 to 65 (GHT) contribute to the GTP site. Aspartate 36 functions as the Proton acceptor in the catalytic mechanism. 2 residues coordinate Mg(2+): aspartate 36 and glycine 63. Residues 36–39 (DEGK), 61–64 (NAGH), threonine 153, arginine 167, asparagine 245, threonine 260, and arginine 324 each bind IMP. Catalysis depends on histidine 64, which acts as the Proton donor. Residue 320 to 326 (VTTKRKR) participates in substrate binding. GTP-binding positions include arginine 326, 352–354 (KLD), and 435–437 (GVG).

Belongs to the adenylosuccinate synthetase family. As to quaternary structure, homodimer. Requires Mg(2+) as cofactor.

It localises to the cytoplasm. It catalyses the reaction IMP + L-aspartate + GTP = N(6)-(1,2-dicarboxyethyl)-AMP + GDP + phosphate + 2 H(+). It functions in the pathway purine metabolism; AMP biosynthesis via de novo pathway; AMP from IMP: step 1/2. Plays an important role in the de novo pathway and in the salvage pathway of purine nucleotide biosynthesis. Catalyzes the first committed step in the biosynthesis of AMP from IMP. The protein is Adenylosuccinate synthetase of Drosophila erecta (Fruit fly).